A 218-amino-acid polypeptide reads, in one-letter code: Ribonuclease T (218 aa).

Residues 24 to 198 (VIIDVETAGF…YDAERTAELF (175 aa)) form the Exonuclease domain. D27, E29, H185, and D190 together coordinate Mg(2+). Residue H185 is the Proton donor/acceptor of the active site.

This sequence belongs to the RNase T family. Homodimer. The cofactor is Mg(2+).

Its function is as follows. Trims short 3' overhangs of a variety of RNA species, leaving a one or two nucleotide 3' overhang. Responsible for the end-turnover of tRNA: specifically removes the terminal AMP residue from uncharged tRNA (tRNA-C-C-A). Also appears to be involved in tRNA biosynthesis. This chain is Ribonuclease T, found in Histophilus somni (strain 129Pt) (Haemophilus somnus).